The primary structure comprises 484 residues: Glycogen synthase (484 aa).

Position 15 (Lys-15) interacts with ADP-alpha-D-glucose.

This sequence belongs to the glycosyltransferase 1 family. Bacterial/plant glycogen synthase subfamily.

It carries out the reaction [(1-&gt;4)-alpha-D-glucosyl](n) + ADP-alpha-D-glucose = [(1-&gt;4)-alpha-D-glucosyl](n+1) + ADP + H(+). Its pathway is glycan biosynthesis; glycogen biosynthesis. Synthesizes alpha-1,4-glucan chains using ADP-glucose. This is Glycogen synthase from Geotalea uraniireducens (strain Rf4) (Geobacter uraniireducens).